Reading from the N-terminus, the 541-residue chain is Membrane protein insertase YidC (541 aa).

Residues 6 to 26 (SLLVLALIFISFLVYQQWQLD) traverse the membrane as a helical segment. The segment at 34–56 (EQTTSITATSDVPASSPSNSQAI) is disordered. 4 helical membrane passes run 337–357 (FWLL…IICV), 416–436 (LGGC…YWTF), 454–474 (LSAQ…MFLL), and 495–515 (PLVF…YWLV).

The protein belongs to the OXA1/ALB3/YidC family. Type 1 subfamily. As to quaternary structure, interacts with the Sec translocase complex via SecD. Specifically interacts with transmembrane segments of nascent integral membrane proteins during membrane integration.

It is found in the cell inner membrane. Functionally, required for the insertion and/or proper folding and/or complex formation of integral membrane proteins into the membrane. Involved in integration of membrane proteins that insert both dependently and independently of the Sec translocase complex, as well as at least some lipoproteins. Aids folding of multispanning membrane proteins. The polypeptide is Membrane protein insertase YidC (Haemophilus influenzae (strain 86-028NP)).